A 424-amino-acid polypeptide reads, in one-letter code: Protein CLP1 homolog 5 (424 aa).

ATP-binding positions include glutamate 16, threonine 56, and 124-129 (DSGKST).

It belongs to the Clp1 family. Clp1 subfamily. Forms a complex with cleavage and polyadenylation specificity factor (CPSF) subunits PCFS1, FIPS3 and CPSF30.

The protein localises to the nucleus. Functionally, required for endonucleolytic cleavage during polyadenylation-dependent pre-mRNA 3'-end formation. In Arabidopsis thaliana (Mouse-ear cress), this protein is Protein CLP1 homolog 5.